The chain runs to 243 residues: Precursor of CEP9 (243 aa).

The first 26 residues, 1-26 (MKLLSITLTSIVISMVFYQTPITTEA), serve as a signal peptide directing secretion. The propeptide occupies 28–44 (SLRKTNDQDHFKAGFTD). Disordered regions lie at residues 42–63 (FTDDFVPTSPGNSPGVGHKKGN), 91–173 (KTGS…VKGF), and 189–243 (NGQD…EPKA). At Pro-48 the chain carries Hydroxyproline; partial. The residue at position 51 (Pro-51) is a Hydroxyproline. Pro-55 bears the Hydroxyproline; partial mark. A propeptide spanning residues 60–96 (KKGNVNVEGFQDDFKPTEGRKLLKTNVQDHFKTGSTD) is cleaved from the precursor. A hydroxyproline mark is found at Pro-100, Pro-103, and Pro-107. A propeptide spanning residues 112–148 (KKGNVNVESSEDDFKHKEGRKLQQTNGQNHFKTGSTD) is cleaved from the precursor. Over residues 133 to 147 (LQQTNGQNHFKTGST) the composition is skewed to polar residues. 3 positions are modified to hydroxyproline: Pro-152, Pro-155, and Pro-159. The propeptide occupies 164–200 (KKGHANVKGFKDDFAPTEEIRLQKMNGQDHFKTGSTD). Hydroxyproline occurs at positions 204, 207, and 211. The propeptide occupies 216-219 (KKGD). Residues Pro-223, Pro-226, and Pro-230 each carry the hydroxyproline modification. Residues 235–243 (AVKNDEPKA) constitute a propeptide that is removed on maturation.

Belongs to the C-terminally encoded plant signaling peptide (CEP) family. As to quaternary structure, interacts with CEP receptors (e.g. CEPR1 and CEPR2). In terms of processing, hydroxylated peptide is more active than non-hydroxylated peptide. Post-translationally, the mature small signaling peptide is generated by proteolytic processing of the longer precursor. As to expression, expressed in lateral root primordia and in lateral roots excluding the meristem region. Also present in the aerial tissues, such as leaf petioles and the shoot apex region.

The protein resides in the secreted. It is found in the extracellular space. Its subcellular location is the apoplast. Extracellular signaling peptide that represses primary root growth rate and significantly inhibits lateral root formation. Modulates leaf morphology. Regulates systemic nitrogen (N)-demand signaling. Mediates up-regulation of genes involved in N uptake and assimilation pathways. The polypeptide is Precursor of CEP9 (Arabidopsis thaliana (Mouse-ear cress)).